A 543-amino-acid polypeptide reads, in one-letter code: Chaperonin GroEL (543 aa).

ATP-binding positions include 29 to 32 (TVGP), 86 to 90 (DGTTT), Gly-413, and Asp-504.

This sequence belongs to the chaperonin (HSP60) family. As to quaternary structure, forms a cylinder of 14 subunits composed of two heptameric rings stacked back-to-back. Interacts with the co-chaperonin GroES.

Its subcellular location is the cytoplasm. It carries out the reaction ATP + H2O + a folded polypeptide = ADP + phosphate + an unfolded polypeptide.. Functionally, together with its co-chaperonin GroES, plays an essential role in assisting protein folding. The GroEL-GroES system forms a nano-cage that allows encapsulation of the non-native substrate proteins and provides a physical environment optimized to promote and accelerate protein folding. This is Chaperonin GroEL from Mycoplasma genitalium (strain ATCC 33530 / DSM 19775 / NCTC 10195 / G37) (Mycoplasmoides genitalium).